The chain runs to 332 residues: Ethylene-responsive transcription factor ERF119 (332 aa).

The interval 1-33 is disordered; that stretch reads MAERKKRSSIQTNKPNKKPMKKKPFQLNHLPGL. Residues 15–24 show a composition bias toward basic residues; sequence PNKKPMKKKP. Positions 130-187 form a DNA-binding region, AP2/ERF; it reads KPVGVRQRKWGKWAAEIRHPITKVRTWLGTYETLEQAADAYATKKLEFDALAAATSAA.

The protein belongs to the AP2/ERF transcription factor family. ERF subfamily.

It is found in the nucleus. Its function is as follows. Probably acts as a transcriptional activator. Binds to the GCC-box pathogenesis-related promoter element. May be involved in the regulation of gene expression by stress factors and by components of stress signal transduction pathways. The chain is Ethylene-responsive transcription factor ERF119 (ERF119) from Arabidopsis thaliana (Mouse-ear cress).